The sequence spans 563 residues: Arginine--tRNA ligase (563 aa).

Positions 119 to 129 match the 'HIGH' region motif; the sequence is ANPTGPLHVGR.

It belongs to the class-I aminoacyl-tRNA synthetase family.

The protein resides in the cytoplasm. It carries out the reaction tRNA(Arg) + L-arginine + ATP = L-arginyl-tRNA(Arg) + AMP + diphosphate. This chain is Arginine--tRNA ligase, found in Methanocella arvoryzae (strain DSM 22066 / NBRC 105507 / MRE50).